Consider the following 272-residue polypeptide: Undecaprenyl-diphosphatase (272 aa).

The next 7 membrane-spanning stretches (helical) occupy residues 6 to 26, 45 to 65, 92 to 112, 115 to 135, 189 to 209, 225 to 245, and 251 to 271; these read SLLIAFILGVVEGLTEFLPVS, AKTFEVIIQLGSILAVVVMFW, THILLAMIPAVVLGLVFHDVI, LFYPQNVMYALVVGGFLLLAA, YAASEFSFILAVPMMMGATVL, MFAVGFVTAFLVALIAIKTFL, and ISFVPFAIYRFIVAGVVYMVF.

The protein belongs to the UppP family.

The protein localises to the cell inner membrane. It carries out the reaction di-trans,octa-cis-undecaprenyl diphosphate + H2O = di-trans,octa-cis-undecaprenyl phosphate + phosphate + H(+). In terms of biological role, catalyzes the dephosphorylation of undecaprenyl diphosphate (UPP). Confers resistance to bacitracin. This Pectobacterium carotovorum subsp. carotovorum (strain PC1) protein is Undecaprenyl-diphosphatase.